The sequence spans 315 residues: Aspartate carbamoyltransferase catalytic subunit (315 aa).

The carbamoyl phosphate site is built by arginine 65 and threonine 66. Lysine 93 lines the L-aspartate pocket. Carbamoyl phosphate-binding residues include arginine 115, histidine 145, and glutamine 148. Arginine 179 and arginine 234 together coordinate L-aspartate. 2 residues coordinate carbamoyl phosphate: glycine 275 and proline 276.

The protein belongs to the aspartate/ornithine carbamoyltransferase superfamily. ATCase family. In terms of assembly, heterododecamer (2C3:3R2) of six catalytic PyrB chains organized as two trimers (C3), and six regulatory PyrI chains organized as three dimers (R2).

The catalysed reaction is carbamoyl phosphate + L-aspartate = N-carbamoyl-L-aspartate + phosphate + H(+). Its pathway is pyrimidine metabolism; UMP biosynthesis via de novo pathway; (S)-dihydroorotate from bicarbonate: step 2/3. Functionally, catalyzes the condensation of carbamoyl phosphate and aspartate to form carbamoyl aspartate and inorganic phosphate, the committed step in the de novo pyrimidine nucleotide biosynthesis pathway. This is Aspartate carbamoyltransferase catalytic subunit from Xanthomonas campestris pv. campestris (strain 8004).